The sequence spans 395 residues: Cysteine synthase 2 (395 aa).

Residues 6-22 (QDLASGIAMGAVFMYLL) form a helical membrane-spanning segment. K83 is subject to N6-(pyridoxal phosphate)lysine. Pyridoxal 5'-phosphate is bound by residues 228–232 (GTGGT) and S335.

The protein belongs to the cysteine synthase/cystathionine beta-synthase family. Pyridoxal 5'-phosphate is required as a cofactor.

It is found in the mitochondrion. It localises to the mitochondrion outer membrane. The catalysed reaction is O-acetyl-L-serine + hydrogen sulfide = L-cysteine + acetate. In terms of biological role, putative cysteine synthase that catalyzes the conversion of O-acetyl-L-serine (OAS) into cysteine, the last step in the cysteine biosynthesis pathway. However, in contrast to cysteine synthase cys11, this CS-like protein seems not to function in cysteine biosynthesis, at least under normal growth conditions, although the transcript is produced. In Schizosaccharomyces pombe (strain 972 / ATCC 24843) (Fission yeast), this protein is Cysteine synthase 2 (cys12).